Here is a 607-residue protein sequence, read N- to C-terminus: CUB and zona pellucida-like domain-containing protein 1 (607 aa).

A signal peptide spans Met-1–Ala-24. The cysteines at positions 17 and 58 are disulfide-linked. CUB domains follow at residues Glu-25 to Ser-146 and Cys-154 to Ile-265. The Lumenal portion of the chain corresponds to Glu-25–Ser-568. 3 N-linked (GlcNAc...) asparagine glycosylation sites follow: Asn-29, Asn-57, and Asn-67. 3 cysteine pairs are disulfide-bonded: Cys-85–Cys-107, Cys-154–Cys-180, and Cys-207–Cys-229. The ZP domain maps to Thr-276 to Arg-519. 2 N-linked (GlcNAc...) asparagine glycosylation sites follow: Asn-394 and Asn-419. Cys-442 and Cys-498 form a disulfide bridge. The helical transmembrane segment at Val-569–Val-589 threads the bilayer. The Cytoplasmic segment spans residues Arg-590–Tyr-607.

As to expression, detected in pancreas and epithelium of ovary. Expressed at higher levels in ovarian tumors than in normal tissue.

Its subcellular location is the zymogen granule membrane. In terms of biological role, localized to zymogen granules, where it functions in trypsinogen activation. May indirectly regulate cell motility, cell-cell and cell/extracellular matrix interactions. The chain is CUB and zona pellucida-like domain-containing protein 1 from Homo sapiens (Human).